A 394-amino-acid polypeptide reads, in one-letter code: Protein-glutamate methylesterase/protein-glutamine glutaminase 2 (394 aa).

Residues 4-121 (KVLVVDDSSF…ARNRDEAISL (118 aa)) form the Response regulatory domain. At Asp-55 the chain carries 4-aspartylphosphate. Residues 202-394 (SGKKYQLMAI…AERILVEVGR (193 aa)) enclose the CheB-type methylesterase domain. Active-site residues include Ser-214, His-241, and Asp-337.

It belongs to the CheB family. In terms of processing, phosphorylated by CheA. Phosphorylation of the N-terminal regulatory domain activates the methylesterase activity.

It localises to the cytoplasm. The catalysed reaction is [protein]-L-glutamate 5-O-methyl ester + H2O = L-glutamyl-[protein] + methanol + H(+). The enzyme catalyses L-glutaminyl-[protein] + H2O = L-glutamyl-[protein] + NH4(+). Functionally, involved in chemotaxis. Part of a chemotaxis signal transduction system that modulates chemotaxis in response to various stimuli. Catalyzes the demethylation of specific methylglutamate residues introduced into the chemoreceptors (methyl-accepting chemotaxis proteins or MCP) by CheR. Also mediates the irreversible deamidation of specific glutamine residues to glutamic acid. The polypeptide is Protein-glutamate methylesterase/protein-glutamine glutaminase 2 (Photobacterium profundum (strain SS9)).